Consider the following 902-residue polypeptide: Probable dipeptidyl-aminopeptidase B (902 aa).

Disordered regions lie at residues 1–23 and 53–72; these read MTRRRSTSGTSSRSSTDSGLSVD and DAEADVDEPFLPTSSKKLGS. At 1–78 the chain is on the cytoplasmic side; it reads MTRRRSTSGT…KLGSGSRTRQ (78 aa). The segment covering 7–21 has biased composition (low complexity); that stretch reads TSGTSSRSSTDSGLS. The chain crosses the membrane as a helical; Signal-anchor for type II membrane protein span at residues 79-99; that stretch reads IFWALVILCLGGWVLALVLFL. Residues 100-902 lie on the Vacuolar side of the membrane; the sequence is THGRASSQTA…VKRSVPAFAH (803 aa). 2 N-linked (GlcNAc...) asparagine glycosylation sites follow: asparagine 335 and asparagine 626. Residue serine 740 is the Charge relay system of the active site. N-linked (GlcNAc...) asparagine glycans are attached at residues asparagine 794 and asparagine 799. Residues aspartate 817 and histidine 850 each act as charge relay system in the active site.

The protein belongs to the peptidase S9B family.

It is found in the vacuole membrane. It carries out the reaction Release of an N-terminal dipeptide, Xaa-Yaa-|-Zaa-, from a polypeptide, preferentially when Yaa is Pro, provided Zaa is neither Pro nor hydroxyproline.. Type IV dipeptidyl-peptidase which removes N-terminal dipeptides sequentially from polypeptides having unsubstituted N-termini provided that the penultimate residue is proline. The protein is Probable dipeptidyl-aminopeptidase B (dapB) of Aspergillus oryzae (strain ATCC 42149 / RIB 40) (Yellow koji mold).